The primary structure comprises 484 residues: UDP-N-acetylmuramoyl-L-alanyl-D-glutamate--L-lysine ligase (484 aa).

Residue S43 participates in UDP-N-acetyl-alpha-D-muramoyl-L-alanyl-D-glutamate binding. 119 to 125 contributes to the ATP binding site; it reads GTKGKTT. Residues 161 to 162, S188, and R196 contribute to the UDP-N-acetyl-alpha-D-muramoyl-L-alanyl-D-glutamate site; that span reads TT. K230 is modified (N6-carboxylysine). The L-lysine recognition motif signature appears at 405–408; sequence DDPN.

Belongs to the MurCDEF family. MurE subfamily. In terms of processing, carboxylation is probably crucial for Mg(2+) binding and, consequently, for the gamma-phosphate positioning of ATP.

It is found in the cytoplasm. It catalyses the reaction UDP-N-acetyl-alpha-D-muramoyl-L-alanyl-D-glutamate + L-lysine + ATP = UDP-N-acetyl-alpha-D-muramoyl-L-alanyl-gamma-D-glutamyl-L-lysine + ADP + phosphate + H(+). It functions in the pathway cell wall biogenesis; peptidoglycan biosynthesis. Catalyzes the addition of L-lysine to the nucleotide precursor UDP-N-acetylmuramoyl-L-alanyl-D-glutamate (UMAG) in the biosynthesis of bacterial cell-wall peptidoglycan. The sequence is that of UDP-N-acetylmuramoyl-L-alanyl-D-glutamate--L-lysine ligase from Streptococcus agalactiae serotype Ia (strain ATCC 27591 / A909 / CDC SS700).